A 152-amino-acid chain; its full sequence is Protein SprT-like (152 aa).

Positions 7–148 (QRLVEEVSLQ…GKCKGKLNLI (142 aa)) constitute a SprT-like domain. Residue His-67 coordinates Zn(2+). Residue Glu-68 is part of the active site. His-71 contacts Zn(2+).

This sequence belongs to the SprT family. Requires Zn(2+) as cofactor.

The protein resides in the cytoplasm. The polypeptide is Protein SprT-like (Bacillus cereus (strain 03BB102)).